The sequence spans 729 residues: Phosphoribosylformylglycinamidine synthase subunit PurL (729 aa).

The active site involves H54. The ATP site is built by Y57 and K96. Mg(2+) is bound at residue E98. Residues 99-102 (SHNH) and R121 contribute to the substrate site. Catalysis depends on H100, which acts as the Proton acceptor. Position 122 (D122) interacts with Mg(2+). A substrate-binding site is contributed by Q245. Residue D273 participates in Mg(2+) binding. 317–319 (ETQ) serves as a coordination point for substrate. Positions 495 and 532 each coordinate ATP. Mg(2+) is bound at residue N533. S535 contacts substrate.

The protein belongs to the FGAMS family. In terms of assembly, monomer. Part of the FGAM synthase complex composed of 1 PurL, 1 PurQ and 2 PurS subunits.

The protein resides in the cytoplasm. The catalysed reaction is N(2)-formyl-N(1)-(5-phospho-beta-D-ribosyl)glycinamide + L-glutamine + ATP + H2O = 2-formamido-N(1)-(5-O-phospho-beta-D-ribosyl)acetamidine + L-glutamate + ADP + phosphate + H(+). It functions in the pathway purine metabolism; IMP biosynthesis via de novo pathway; 5-amino-1-(5-phospho-D-ribosyl)imidazole from N(2)-formyl-N(1)-(5-phospho-D-ribosyl)glycinamide: step 1/2. In terms of biological role, part of the phosphoribosylformylglycinamidine synthase complex involved in the purines biosynthetic pathway. Catalyzes the ATP-dependent conversion of formylglycinamide ribonucleotide (FGAR) and glutamine to yield formylglycinamidine ribonucleotide (FGAM) and glutamate. The FGAM synthase complex is composed of three subunits. PurQ produces an ammonia molecule by converting glutamine to glutamate. PurL transfers the ammonia molecule to FGAR to form FGAM in an ATP-dependent manner. PurS interacts with PurQ and PurL and is thought to assist in the transfer of the ammonia molecule from PurQ to PurL. This is Phosphoribosylformylglycinamidine synthase subunit PurL from Staphylococcus aureus (strain bovine RF122 / ET3-1).